A 321-amino-acid chain; its full sequence is Lipoyl synthase (321 aa).

[4Fe-4S] cluster is bound by residues cysteine 68, cysteine 73, cysteine 79, cysteine 94, cysteine 98, cysteine 101, and serine 308. Residues 80–297 enclose the Radical SAM core domain; the sequence is FNHGTATFMI…KEIALELGFT (218 aa).

This sequence belongs to the radical SAM superfamily. Lipoyl synthase family. The cofactor is [4Fe-4S] cluster.

The protein localises to the cytoplasm. The enzyme catalyses [[Fe-S] cluster scaffold protein carrying a second [4Fe-4S](2+) cluster] + N(6)-octanoyl-L-lysyl-[protein] + 2 oxidized [2Fe-2S]-[ferredoxin] + 2 S-adenosyl-L-methionine + 4 H(+) = [[Fe-S] cluster scaffold protein] + N(6)-[(R)-dihydrolipoyl]-L-lysyl-[protein] + 4 Fe(3+) + 2 hydrogen sulfide + 2 5'-deoxyadenosine + 2 L-methionine + 2 reduced [2Fe-2S]-[ferredoxin]. It participates in protein modification; protein lipoylation via endogenous pathway; protein N(6)-(lipoyl)lysine from octanoyl-[acyl-carrier-protein]: step 2/2. Its function is as follows. Catalyzes the radical-mediated insertion of two sulfur atoms into the C-6 and C-8 positions of the octanoyl moiety bound to the lipoyl domains of lipoate-dependent enzymes, thereby converting the octanoylated domains into lipoylated derivatives. The sequence is that of Lipoyl synthase from Vibrio campbellii (strain ATCC BAA-1116).